A 98-amino-acid polypeptide reads, in one-letter code: MNLKVLFLLAMVLVTLCLGEDRVTDRRKFCKCCASCCVSGRNIDGDCPPHGNQQFCHFCNREKVKIKRDCRSNQTAYQHCMEYHIQCASVKNHVCTDQ.

Residues 1–21 form the signal peptide; sequence MNLKVLFLLAMVLVTLCLGED. A propeptide spanning residues 22-28 is cleaved from the precursor; the sequence is RVTDRRK.

The protein belongs to the teretoxin C (TC) superfamily. Post-translationally, contains 6 disulfide bonds. As to expression, expressed by the venom duct.

Its subcellular location is the secreted. The chain is Tan_12Cys from Terebra anilis (Auger snail).